The following is a 465-amino-acid chain: 23S rRNA (uracil(1939)-C(5))-methyltransferase RlmD (465 aa).

A disordered region spans residues 1–22; the sequence is MSEAVPTSARKSRNAPVAPGPA. The TRAM domain maps to 16–80; sequence PVAPGPAPVL…PSYEQATVVD (65 aa). Residues Cys93, Cys99, Cys102, and Cys181 each contribute to the [4Fe-4S] cluster site. The S-adenosyl-L-methionine site is built by Gln289, Phe318, Asn323, Glu339, Asn367, and Asp388. Residue Cys421 is the Nucleophile of the active site.

The protein belongs to the class I-like SAM-binding methyltransferase superfamily. RNA M5U methyltransferase family. RlmD subfamily.

The catalysed reaction is uridine(1939) in 23S rRNA + S-adenosyl-L-methionine = 5-methyluridine(1939) in 23S rRNA + S-adenosyl-L-homocysteine + H(+). Catalyzes the formation of 5-methyl-uridine at position 1939 (m5U1939) in 23S rRNA. The sequence is that of 23S rRNA (uracil(1939)-C(5))-methyltransferase RlmD from Burkholderia lata (strain ATCC 17760 / DSM 23089 / LMG 22485 / NCIMB 9086 / R18194 / 383).